The sequence spans 314 residues: MTYVGQSASAAQQSVAERASVKDVLAAYVGLTKPRVIELLLLTTVPVMFFADRGIPELWLVVATVVGGAFSAGSASVFNCVYDRDIDEQMRRTRRRALPRHIVSPAAALVFGFVLGILSTVILYVWVNPLSAALSVAANAFYVLVYTMLLKRRTTQNIVWGGLAGCFPALIGWTAVTGSLSWVPVVLFAVVFFWTPPHTWALALRYREDYANVDVPMLPVVAPAREVGRQVVIYSWVMVATSLLLWPVAGTGIFYPIAAGVLGAVFLLEAHRMWARSRDTESLSVIQPMRLFHSSNLYLSLLFVAVALDPLLAG.

Helical transmembrane passes span Leu-58 to Phe-78, Ala-107 to Val-127, Leu-130 to Leu-150, Trp-173 to Phe-193, Val-227 to Pro-247, Val-248 to Leu-268, and Ser-294 to Gly-314.

Belongs to the UbiA prenyltransferase family. Protoheme IX farnesyltransferase subfamily.

It is found in the cell membrane. It carries out the reaction heme b + (2E,6E)-farnesyl diphosphate + H2O = Fe(II)-heme o + diphosphate. Its pathway is porphyrin-containing compound metabolism; heme O biosynthesis; heme O from protoheme: step 1/1. Converts heme B (protoheme IX) to heme O by substitution of the vinyl group on carbon 2 of heme B porphyrin ring with a hydroxyethyl farnesyl side group. The protein is Protoheme IX farnesyltransferase of Nocardioides sp. (strain ATCC BAA-499 / JS614).